The following is a 155-amino-acid chain: Ribosome maturation factor RimP (155 aa).

The protein belongs to the RimP family.

Its subcellular location is the cytoplasm. Required for maturation of 30S ribosomal subunits. In Prochlorococcus marinus subsp. pastoris (strain CCMP1986 / NIES-2087 / MED4), this protein is Ribosome maturation factor RimP.